Consider the following 313-residue polypeptide: Intelectin-like protein (313 aa).

In terms of domain architecture, Fibrinogen C-terminal spans 33–251 (TSCCSQTSPG…NNEKAPMALC (219 aa)). Ca(2+)-binding residues include histidine 86, glutamate 87, asparagine 89, glycine 92, glycine 97, aspartate 98, and aspartate 133. 3 disulfide bridges follow: cysteine 94–cysteine 280, cysteine 199–cysteine 259, and cysteine 251–cysteine 265. Ca(2+) is bound by residues asparagine 260, glutamate 262, glutamate 274, and aspartate 282. A carbohydrate is bound by residues 262 to 263 (EH) and glutamate 274.

In terms of assembly, monomer, homodimer, homotrimer and homotetramer. Mostly monomeric or dimeric.

The protein resides in the secreted. Binds mannan, mannose and, to a lesser degree, D-lactose, N-acetylgalactosamine, N-acetylglucosamine and beta-D-glucose. This Alligator mississippiensis (American alligator) protein is Intelectin-like protein.